The chain runs to 298 residues: WRKY transcription factor 22 (298 aa).

2 disordered regions span residues 75-116 and 181-220; these read EEPR…IQHK and AEHNHPAPTHRNSLAGSTRQKPSDQQTSKSPTTTIATYSS. The span at 88-103 shows a compositional bias: low complexity; that stretch reads SLSASSGSVTSKPSGS. Basic residues predominate over residues 107-116; it reads RSKRRKIQHK. Positions 122 to 188 form a DNA-binding region, WRKY; the sequence is AAEALNSDVW…YTAEHNHPAP (67 aa). A compositionally biased stretch (polar residues) spans 190–220; sequence HRNSLAGSTRQKPSDQQTSKSPTTTIATYSS.

This sequence belongs to the WRKY group II-e family.

It localises to the nucleus. Its function is as follows. Transcription factor involved in the expression of defense genes in innate immune response of plants. Interacts specifically with the W box (5'-(T)TGAC[CT]-3'), a frequently occurring elicitor-responsive cis-acting element. Activates WRKY 29, SIRK and its own promoters. The protein is WRKY transcription factor 22 (WRKY22) of Arabidopsis thaliana (Mouse-ear cress).